Here is a 280-residue protein sequence, read N- to C-terminus: UPF0328 protein ECU06_0020/ECU06_1700 (280 aa).

Belongs to the UPF0328 family.

This Encephalitozoon cuniculi (strain GB-M1) (Microsporidian parasite) protein is UPF0328 protein ECU06_0020/ECU06_1700.